Reading from the N-terminus, the 158-residue chain is Immunoglobulin J chain (158 aa).

The signal sequence occupies residues 1 to 22 (MKNHLFFWGVLAIFVQAVLVTA). Intrachain disulfides connect Cys-36–Cys-122, Cys-95–Cys-115, and Cys-130–Cys-155. Asn-72 is a glycosylation site (N-linked (GlcNAc...) (complex) asparagine).

Part of the secretory IgA (sIgA) complex that consists of two, four or five IgA monomers, and two additional non-Ig polypeptides, namely the JCHAIN and the secretory component (the proteolytic product of PIGR). Part of the secretory IgM (sIgM) complex that consist of five IgM monomers, and two additional non-Ig polypeptides, namely the JCHAIN and the secretory component (the proteolytic product of PIGR). JCHAIN-containing IgM interacts (via CH4 domain) with FCRM (via Ig-like domain). Post-translationally, N-glycosylated. N-glycans attached to Asn-72 varies from truncated, differentially fucosylated to sialylated (NeuGc) complex types: Man3GlcNAc2; GlcNAc2Man3GlcNAc2(Fuc); Gal1GlcNAc1Man3GlcNAc2; GlcNAc2Man3GlcNAc2; GlcNAc1Man3GlcNAc2; GlcNAc1Man2GlcNAc2 and NeuGc1Gal1GlcNAc2Man3GlcNAc2.

It is found in the secreted. Its function is as follows. Serves to link two monomer units of either IgM or IgA. In the case of IgM, the J chain-joined dimer is a nucleating unit for the IgM pentamer, and in the case of IgA it induces dimers and/or larger polymers. It also helps to bind these immunoglobulins to secretory component. In Equus asinus (Donkey), this protein is Immunoglobulin J chain (JCHAIN).